A 118-amino-acid polypeptide reads, in one-letter code: MARVKRGVIARARHKKILKQAKGYYGARSRVYRVAFQAVIKAGQYAYRDRRQRKRQFRQLWIARINAAARQNGISYSKFINGLKKASVEIDRKILADIAVFDKVAFTALVEKAKAALA.

This sequence belongs to the bacterial ribosomal protein bL20 family.

In terms of biological role, binds directly to 23S ribosomal RNA and is necessary for the in vitro assembly process of the 50S ribosomal subunit. It is not involved in the protein synthesizing functions of that subunit. This Klebsiella pneumoniae (strain 342) protein is Large ribosomal subunit protein bL20.